We begin with the raw amino-acid sequence, 225 residues long: PKHD-type hydroxylase YbiX (225 aa).

Residues 78 to 177 (TLSTPLFNRY…RVASFMWIQS (100 aa)) form the Fe2OG dioxygenase domain. Residues histidine 96, aspartate 98, and histidine 158 each contribute to the Fe cation site. A 2-oxoglutarate-binding site is contributed by arginine 168.

Requires Fe(2+) as cofactor. L-ascorbate is required as a cofactor.

The polypeptide is PKHD-type hydroxylase YbiX (Escherichia coli (strain 55989 / EAEC)).